Here is a 67-residue protein sequence, read N- to C-terminus: Metallothionein-A (67 aa).

This sequence belongs to the metallothionein superfamily. Type 4 family.

In terms of biological role, metallothioneins have a high content of cysteine residues that bind various heavy metals. This is Metallothionein-A from Sphaerechinus granularis (Purple sea urchin).